The primary structure comprises 1072 residues: DNA-directed RNA polymerase subunit beta (1072 aa).

This sequence belongs to the RNA polymerase beta chain family. As to quaternary structure, in plastids the minimal PEP RNA polymerase catalytic core is composed of four subunits: alpha, beta, beta', and beta''. When a (nuclear-encoded) sigma factor is associated with the core the holoenzyme is formed, which can initiate transcription.

Its subcellular location is the plastid. It localises to the chloroplast. It catalyses the reaction RNA(n) + a ribonucleoside 5'-triphosphate = RNA(n+1) + diphosphate. Functionally, DNA-dependent RNA polymerase catalyzes the transcription of DNA into RNA using the four ribonucleoside triphosphates as substrates. The polypeptide is DNA-directed RNA polymerase subunit beta (Olimarabidopsis pumila (Dwarf rocket)).